A 57-amino-acid chain; its full sequence is Phospholipase A2 superbin b (57 aa).

Ca(2+) contacts are provided by Tyr28, Gly30, and Gly32. A disulfide bond links Cys29 and Cys45. His48 is a catalytic residue. Residue Asp49 participates in Ca(2+) binding.

It depends on Ca(2+) as a cofactor. In terms of tissue distribution, expressed by the venom gland.

The protein resides in the secreted. It carries out the reaction a 1,2-diacyl-sn-glycero-3-phosphocholine + H2O = a 1-acyl-sn-glycero-3-phosphocholine + a fatty acid + H(+). Its function is as follows. Snake venom phospholipase A2 (PLA2) that inhibits collagen-induced platelet aggregation. In terms of inhibition of platelet aggregation, superbin b is more potent as superbin c, and d. PLA2 catalyzes the calcium-dependent hydrolysis of the 2-acyl groups in 3-sn-phosphoglycerides. This Austrelaps superbus (Lowland copperhead snake) protein is Phospholipase A2 superbin b.